Reading from the N-terminus, the 64-residue chain is Putative H/ACA ribonucleoprotein complex subunit 3 (64 aa).

This sequence belongs to the NOP10 family. As to quaternary structure, component of the small nucleolar ribonucleoprotein particles containing H/ACA-type snoRNAs (H/ACA snoRNPs).

It localises to the nucleus. The protein resides in the nucleolus. Its function is as follows. Required for ribosome biogenesis. Part of a complex which catalyzes pseudouridylation of rRNA. This involves the isomerization of uridine such that the ribose is subsequently attached to C5, instead of the normal N1. Pseudouridine ('psi') residues may serve to stabilize the conformation of rRNAs. This Caenorhabditis elegans protein is Putative H/ACA ribonucleoprotein complex subunit 3 (nola-3).